The chain runs to 159 residues: Ribosomal RNA large subunit methyltransferase H (159 aa).

S-adenosyl-L-methionine contacts are provided by residues Leu-76, Gly-108, and 127–132 (LSKMTF).

This sequence belongs to the RNA methyltransferase RlmH family. In terms of assembly, homodimer.

It is found in the cytoplasm. The catalysed reaction is pseudouridine(1915) in 23S rRNA + S-adenosyl-L-methionine = N(3)-methylpseudouridine(1915) in 23S rRNA + S-adenosyl-L-homocysteine + H(+). In terms of biological role, specifically methylates the pseudouridine at position 1915 (m3Psi1915) in 23S rRNA. The sequence is that of Ribosomal RNA large subunit methyltransferase H from Ureaplasma urealyticum serovar 10 (strain ATCC 33699 / Western).